The sequence spans 169 residues: Peptide deformylase 1 (169 aa).

Residues cysteine 91 and histidine 133 each coordinate Fe cation. Glutamate 134 is a catalytic residue. Histidine 137 contacts Fe cation.

Belongs to the polypeptide deformylase family. The cofactor is Fe(2+).

The catalysed reaction is N-terminal N-formyl-L-methionyl-[peptide] + H2O = N-terminal L-methionyl-[peptide] + formate. In terms of biological role, removes the formyl group from the N-terminal Met of newly synthesized proteins. Requires at least a dipeptide for an efficient rate of reaction. N-terminal L-methionine is a prerequisite for activity but the enzyme has broad specificity at other positions. In Vibrio cholerae serotype O1 (strain ATCC 39315 / El Tor Inaba N16961), this protein is Peptide deformylase 1.